The primary structure comprises 361 residues: MDIFGENKTQMNTTTPTENWTSVYSIVRWIQMTMAVLSILGAGSIILYAAFQRLVKKPEVLPLFLLSLTDLLLALSWLCGGLLFTQSCNSYATCYNLHIVEQTLYMASFFYTLHYVWVLYTGLNGKYHRRLNGFPAEAARTRNCRCLGPVLSCLLPLLLTAPVFVAGNVFQCYTNFTQPYRCLLMHTGAVYLTSSASPELTACSIIQEYCMAIFLGTFLITIVGMSIFMGKARSLYKRVVTSQGFFGGSHWTTLRLLERRMVLYPSAFFFCWGPALLLATMMLVKPDVIEGKMGVALYILQAFTSASQGLLNCLVYGWTQKHFRSLSSSTVRDANTQTPLLRSQKPNYAALHSAASLTNFV.

Helical transmembrane passes span 29 to 49 (WIQMTMAVLSILGAGSIILYA), 64 to 84 (FLLSLTDLLLALSWLCGGLLF), 103 to 123 (TLYMASFFYTLHYVWVLYTGL), 147 to 167 (LGPVLSCLLPLLLTAPVFVAG), 210 to 230 (CMAIFLGTFLITIVGMSIFMG), 261 to 281 (MVLYPSAFFFCWGPALLLATM), and 295 to 315 (VALYILQAFTSASQGLLNCLV).

It is found in the membrane. The polypeptide is Transmembrane protein 116 (tmem116) (Danio rerio (Zebrafish)).